The following is a 127-amino-acid chain: Aspartate 1-decarboxylase (127 aa).

Ser-25 acts as the Schiff-base intermediate with substrate; via pyruvic acid in catalysis. Ser-25 carries the post-translational modification Pyruvic acid (Ser). Substrate is bound at residue Thr-57. The active-site Proton donor is Tyr-58. Position 73-75 (73-75) interacts with substrate; sequence GAA.

It belongs to the PanD family. Heterooctamer of four alpha and four beta subunits. Pyruvate is required as a cofactor. Post-translationally, is synthesized initially as an inactive proenzyme, which is activated by self-cleavage at a specific serine bond to produce a beta-subunit with a hydroxyl group at its C-terminus and an alpha-subunit with a pyruvoyl group at its N-terminus.

It is found in the cytoplasm. It carries out the reaction L-aspartate + H(+) = beta-alanine + CO2. The protein operates within cofactor biosynthesis; (R)-pantothenate biosynthesis; beta-alanine from L-aspartate: step 1/1. Functionally, catalyzes the pyruvoyl-dependent decarboxylation of aspartate to produce beta-alanine. The protein is Aspartate 1-decarboxylase of Bacillus cereus (strain G9842).